Here is a 139-residue protein sequence, read N- to C-terminus: Small ribosomal subunit protein uS11 (139 aa).

Residues 1–33 form a disordered region; sequence MPPAKKGPATSARKGQKTRRREKKNVPHGAAHI. Residues 14 to 23 are compositionally biased toward basic residues; the sequence is KGQKTRRREK.

This sequence belongs to the universal ribosomal protein uS11 family. In terms of assembly, part of the 30S ribosomal subunit. Interacts with proteins S7 and S18. Binds to IF-3.

Its function is as follows. Located on the platform of the 30S subunit, it bridges several disparate RNA helices of the 16S rRNA. Forms part of the Shine-Dalgarno cleft in the 70S ribosome. This is Small ribosomal subunit protein uS11 from Mycobacterium bovis (strain ATCC BAA-935 / AF2122/97).